The following is a 62-amino-acid chain: Large ribosomal subunit protein bL28 (62 aa).

It belongs to the bacterial ribosomal protein bL28 family.

The chain is Large ribosomal subunit protein bL28 from Streptococcus uberis (strain ATCC BAA-854 / 0140J).